The following is a 254-amino-acid chain: uncharacterized protein (254 aa).

Belongs to the methyltransferase superfamily.

This is an uncharacterized protein from Mycobacterium tuberculosis (strain ATCC 25177 / H37Ra).